The following is a 386-amino-acid chain: Copper-containing nitrite reductase (386 aa).

The first 18 residues, 1–18 (MKRQALAAIIASMFALAA), serve as a signal peptide directing secretion. Residue cysteine 19 is the site of N-palmitoyl cysteine attachment. The S-diacylglycerol cysteine moiety is linked to residue cysteine 19. Plastocyanin-like domains are found at residues 97–191 (WTFD…ILVE) and 241–342 (GHVG…LKVE). Cu cation is bound by residues histidine 130, histidine 135, histidine 170, cysteine 171, histidine 179, and methionine 184. Histidine 135 serves as a coordination point for substrate. Histidine 276 serves as a coordination point for substrate. A Cu cation-binding site is contributed by histidine 325. Residues 363-386 (GAAPAASAPAASAPAASAPAKSDY) form a disordered region. The span at 364-386 (AAPAASAPAASAPAASAPAKSDY) shows a compositional bias: low complexity. 3 consecutive repeat copies span residues 367–371 (AASAP), 372–376 (AASAP), and 377–381 (AASAP). Positions 367 to 381 (AASAPAASAPAASAP) are 3 X 5 AA tandem repeats of A-A-S-A-P.

It belongs to the multicopper oxidase family. Homotrimer. The cofactor is Cu(+). Cu(2+) serves as cofactor.

It localises to the cell outer membrane. It carries out the reaction nitric oxide + Fe(III)-[cytochrome c] + H2O = Fe(II)-[cytochrome c] + nitrite + 2 H(+). In terms of biological role, catalyzes the reduction of nitrite to nitric oxide (NO). It could be essential for growth and survival in oxygen-depleted environments. The sequence is that of Copper-containing nitrite reductase (aniA) from Neisseria meningitidis serogroup A / serotype 4A (strain DSM 15465 / Z2491).